Consider the following 39-residue polypeptide: Cytochrome b6-f complex subunit 5 (39 aa).

A helical membrane pass occupies residues 5–25 (LLCGIVLGLVPVTLLGLFVSA).

This sequence belongs to the PetG family. As to quaternary structure, the 4 large subunits of the cytochrome b6-f complex are cytochrome b6, subunit IV (17 kDa polypeptide, PetD), cytochrome f and the Rieske protein, while the 4 small subunits are PetG, PetL, PetM and PetN. The complex functions as a dimer.

It is found in the cellular thylakoid membrane. In terms of biological role, component of the cytochrome b6-f complex, which mediates electron transfer between photosystem II (PSII) and photosystem I (PSI), cyclic electron flow around PSI, and state transitions. PetG is required for either the stability or assembly of the cytochrome b6-f complex. The protein is Cytochrome b6-f complex subunit 5 of Prochlorococcus marinus (strain NATL1A).